Consider the following 300-residue polypeptide: Arrestin domain-containing protein 4 (300 aa).

Short sequence motifs (PPxY motif) lie at residues 231–234 and 276–279; these read PPNY and PPLY.

The protein belongs to the arrestin family. As to quaternary structure, interacts with ADRB2. Interacts (via PPxY motifs) with ITCH, NEDD4L and WWP2. Interacts with AVPR2. Identified in a complex containing at least ARRDC4, AVPR2 and HGS. Interacts with SLC11A2; controls the incorporation of SLC11A2 into extracellular vesicles through an ubiquitination-dependent mechanism. Interacts with TRIM65.

The protein localises to the early endosome. It is found in the cell membrane. Its subcellular location is the cytoplasmic vesicle. In terms of biological role, functions as an adapter recruiting ubiquitin-protein ligases to their specific substrates. Plays a role in endocytosis of activated G protein-coupled receptors (GPCRs) Through an ubiquitination-dependent mechanism also plays a role in the incorporation of SLC11A2 into extracellular vesicles. May play a role in glucose uptake. Participates in innate immune response by promoting IFIH1/MDA5 activation through interaction with TRIM65. This chain is Arrestin domain-containing protein 4 (Arrdc4), found in Rattus norvegicus (Rat).